We begin with the raw amino-acid sequence, 500 residues long: MCSVCEGSAEGLVTRKRTHSGGGRSAGSKRKWHRRMGGLSFLIFFVIGSLFSGLMFALLSYAPSYRSRVTPHYLPDGRFLQIADEARVLEPYLSAAVRLPDSLNGTPAGKQQQTARSNEQEALSSLKVAVEMKLMGKDDKALRLFQHAMALSPRHPEILTKYGEFLEHSQQDIVTADHYYYQALTVNPSHSEALANRQRTASIVEHLDQKRFERLDKKRDALSSVHALDAGLKRAEKEAYIQHIYHSVGIEGNTMSLAQTRSILETKMAVDGKSIDEHNEILGLDAAMKYINATLVNKNDFITLKDLLEIHRRVLGHVDPVEGGEFRRTQVYVGGHIPPGPGDLSILMSRFEGWLNAEQSFLMHPVRYAAMAHYKLVHIHPFSDGNGRTSRLLMNTLLMRAGYPPVIIQKQHRHKYYDYLQVANEGDIRPFVRFIADCTERTLDLYLWATSELSHPVPLLAQEEMGGAIGEREHGFGREGGSTVHEGSGTGDSIRIGTMW.

A helical membrane pass occupies residues 39-59 (LSFLIFFVIGSLFSGLMFALL). 2 TPR repeats span residues 122 to 155 (ALSSLKVAVEMKLMGKDDKALRLFQHAMALSPRH) and 156 to 190 (PEILTKYGEFLEHSQQDIVTADHYYYQALTVNPSH). An Inhibitory (S/T)XXXE(G/N) motif motif is present at residues 247–252 (SVGIEG). Residues E251 and 333–336 (VGGH) each bind ATP. The Fido domain maps to 302–437 (ITLKDLLEIH…IRPFVRFIAD (136 aa)). H380 is an active-site residue. ATP-binding positions include 384–391 (DGNGRTSR), 416–417 (YY), and N424. Positions 477 to 500 (GREGGSTVHEGSGTGDSIRIGTMW) are disordered.

The protein belongs to the fic family. As to quaternary structure, homodimer.

Its subcellular location is the membrane. It carries out the reaction L-tyrosyl-[protein] + ATP = O-(5'-adenylyl)-L-tyrosyl-[protein] + diphosphate. The enzyme catalyses L-threonyl-[protein] + ATP = 3-O-(5'-adenylyl)-L-threonyl-[protein] + diphosphate. It catalyses the reaction 3-O-(5'-adenylyl)-L-threonyl-[protein] + H2O = L-threonyl-[protein] + AMP + H(+). The side chain of Glu-251 determines which of the two opposing activities (AMPylase or de-AMPylase) will take place. In response to endoplasmic reticulum stress, mediates de-AMPylase activity. Adenylyltransferase activity is inhibited by the inhibitory helix present at the N-terminus: Glu-251 binds ATP and competes with ATP-binding at Arg-391, thereby preventing adenylyltransferase activity. In unstressed cells, disengagement of Glu-251 promotes adenylyltransferase activity. Activation dissociates ATP-binding from Glu-251, allowing ordered binding of the entire ATP moiety with the alpha-phosphate in an orientation that is productive for accepting an incoming target hydroxyl side chain. In terms of biological role, protein that can both mediate the addition of adenosine 5'-monophosphate (AMP) to specific residues of target proteins (AMPylation), and the removal of the same modification from target proteins (de-AMPylation), depending on the context. The side chain of Glu-251 determines which of the two opposing activities (AMPylase or de-AMPylase) will take place. Acts as a key regulator of the unfolded protein response (UPR) by mediating AMPylation or de-AMPylation of Hsc70-3/BiP. In unstressed cells, acts as an adenylyltransferase by mediating AMPylation of Hsc70-3/BiP at 'Thr-518', thereby inactivating it. In response to endoplasmic reticulum stress, acts as a phosphodiesterase by mediating removal of ATP (de-AMPylation) from Hsc70-3/BiP at 'Thr-518', leading to restore HSPA5/BiP activity. This is Protein adenylyltransferase Fic from Culex quinquefasciatus (Southern house mosquito).